The sequence spans 116 residues: Large ribosomal subunit protein bL20 (116 aa).

It belongs to the bacterial ribosomal protein bL20 family.

Its function is as follows. Binds directly to 23S ribosomal RNA and is necessary for the in vitro assembly process of the 50S ribosomal subunit. It is not involved in the protein synthesizing functions of that subunit. In Helicobacter pylori (strain ATCC 700392 / 26695) (Campylobacter pylori), this protein is Large ribosomal subunit protein bL20 (rplT).